A 154-amino-acid chain; its full sequence is Xanthine-guanine phosphoribosyltransferase (154 aa).

Residues 37–38 and 90–98 each bind 5-phospho-alpha-D-ribose 1-diphosphate; these read RG and DDLVDTGNT. Aspartate 91 contributes to the Mg(2+) binding site. Positions 94 and 137 each coordinate guanine. 2 residues coordinate xanthine: aspartate 94 and isoleucine 137. Residues 94-98 and 136-137 contribute to the GMP site; these read DTGNT and WI.

It belongs to the purine/pyrimidine phosphoribosyltransferase family. XGPT subfamily. As to quaternary structure, homotetramer. Requires Mg(2+) as cofactor.

The protein localises to the cell inner membrane. The enzyme catalyses GMP + diphosphate = guanine + 5-phospho-alpha-D-ribose 1-diphosphate. The catalysed reaction is XMP + diphosphate = xanthine + 5-phospho-alpha-D-ribose 1-diphosphate. It carries out the reaction IMP + diphosphate = hypoxanthine + 5-phospho-alpha-D-ribose 1-diphosphate. It functions in the pathway purine metabolism; GMP biosynthesis via salvage pathway; GMP from guanine: step 1/1. The protein operates within purine metabolism; XMP biosynthesis via salvage pathway; XMP from xanthine: step 1/1. Purine salvage pathway enzyme that catalyzes the transfer of the ribosyl-5-phosphate group from 5-phospho-alpha-D-ribose 1-diphosphate (PRPP) to the N9 position of the 6-oxopurines guanine and xanthine to form the corresponding ribonucleotides GMP (guanosine 5'-monophosphate) and XMP (xanthosine 5'-monophosphate), with the release of PPi. To a lesser extent, also acts on hypoxanthine. In Histophilus somni (strain 129Pt) (Haemophilus somnus), this protein is Xanthine-guanine phosphoribosyltransferase.